Consider the following 384-residue polypeptide: Aurora kinase (384 aa).

Composition is skewed to polar residues over residues 1–12 (MSYPNNKENSNN) and 19–29 (SVPSKQPQRVL). A disordered region spans residues 1–100 (MSYPNNKENS…SSSSSSSQSV (100 aa)). A compositionally biased stretch (low complexity) spans 30–99 (QQQNTNINNH…SSSSSSSSQS (70 aa)). The 251-residue stretch at 110 to 360 (FDIGKLLGMG…LKDVINHPWI (251 aa)) folds into the Protein kinase domain. ATP contacts are provided by residues 116–124 (LGMGRFGHV) and Lys-139. The Proton acceptor role is filled by Asp-233.

This sequence belongs to the protein kinase superfamily. Ser/Thr protein kinase family. Aurora subfamily. Interacts with icpA. Forms a complex at the central spindle.

The protein localises to the cytoplasm. It localises to the chromosome. It is found in the centromere. Its subcellular location is the cytoskeleton. The protein resides in the spindle pole. The protein localises to the cleavage furrow. It localises to the cell projection. It is found in the neuron projection. It carries out the reaction L-seryl-[protein] + ATP = O-phospho-L-seryl-[protein] + ADP + H(+). The catalysed reaction is L-threonyl-[protein] + ATP = O-phospho-L-threonyl-[protein] + ADP + H(+). Functionally, part of a chromosomal passenger complex. The sequence is that of Aurora kinase (aurK) from Dictyostelium discoideum (Social amoeba).